The primary structure comprises 257 residues: NH(3)-dependent NAD(+) synthetase (257 aa).

32 to 39 is an ATP binding site; sequence GLSGGVDS. A Mg(2+)-binding site is contributed by aspartate 38. Arginine 113 lines the deamido-NAD(+) pocket. Threonine 133 lines the ATP pocket. A Mg(2+)-binding site is contributed by glutamate 138. Positions 162 and 184 each coordinate ATP.

This sequence belongs to the NAD synthetase family. As to quaternary structure, homodimer.

The enzyme catalyses deamido-NAD(+) + NH4(+) + ATP = AMP + diphosphate + NAD(+) + H(+). It functions in the pathway cofactor biosynthesis; NAD(+) biosynthesis; NAD(+) from deamido-NAD(+) (ammonia route): step 1/1. Functionally, catalyzes the ATP-dependent amidation of deamido-NAD to form NAD. Uses ammonia as a nitrogen source. This is NH(3)-dependent NAD(+) synthetase from Wolinella succinogenes (strain ATCC 29543 / DSM 1740 / CCUG 13145 / JCM 31913 / LMG 7466 / NCTC 11488 / FDC 602W) (Vibrio succinogenes).